A 411-amino-acid polypeptide reads, in one-letter code: Glutamate dehydrogenase 1 (411 aa).

Residue lysine 102 is part of the active site.

It belongs to the Glu/Leu/Phe/Val dehydrogenases family.

The catalysed reaction is L-glutamate + NAD(+) + H2O = 2-oxoglutarate + NH4(+) + NADH + H(+). It carries out the reaction L-glutamate + NADP(+) + H2O = 2-oxoglutarate + NH4(+) + NADPH + H(+). The sequence is that of Glutamate dehydrogenase 1 (GDH1) from Arabidopsis thaliana (Mouse-ear cress).